The chain runs to 253 residues: Phosphate import ATP-binding protein PstB 1 (253 aa).

The ABC transporter domain maps to Leu7–Ile248. Position 39 to 46 (Gly39 to Ser46) interacts with ATP.

The protein belongs to the ABC transporter superfamily. Phosphate importer (TC 3.A.1.7) family. In terms of assembly, the complex is composed of two ATP-binding proteins (PstB), two transmembrane proteins (PstC and PstA) and a solute-binding protein (PstS).

It localises to the cell membrane. It carries out the reaction phosphate(out) + ATP + H2O = ADP + 2 phosphate(in) + H(+). Part of the ABC transporter complex PstSACB involved in phosphate import. Responsible for energy coupling to the transport system. The chain is Phosphate import ATP-binding protein PstB 1 from Streptococcus pyogenes serotype M2 (strain MGAS10270).